Consider the following 510-residue polypeptide: Monocarboxylate transporter 14 (510 aa).

At 1 to 27 (MYTSHEDIGYDFEDGPKDKKTLKPHPN) the chain is on the cytoplasmic side. Transmembrane regions (helical) follow at residues 28–48 (IDGGWAWMMVLSSFFVHILIM), 74–94 (WVSSLSMGITLIVGPFIGLFI), 103–123 (AIIGGLVNSLGWVLSAYAANV), 127–147 (FITFGVAAGLGSGMAYLPAVV), 159–179 (LAQGLSTTGTGFGTFLMTVLL), and 191–209 (AMLIQGAVSLNLCVCGALM). A disordered region spans residues 214-255 (PGKNPNDPGEKDVRGLPAHSTESVKSTGQQGRTEEKDGGLGN). Residues 233 to 244 (STESVKSTGQQG) show a composition bias toward polar residues. 6 consecutive transmembrane segments (helical) span residues 315 to 335 (MFVAFIFWALFAYSSFVIPFI), 353 to 373 (FPLTSIIAIVHIFGKVILGVI), 379 to 399 (ISVWNVFLLANFTLVLSIFIL), 408 to 428 (LAVICALIGFSSGYFSLMPVV), 443 to 463 (GIIICANGISALLGPPFAGWI), and 474 to 494 (FYICGLLYMIGILFLLIQPCI). The Cytoplasmic portion of the chain corresponds to 495–510 (RIIEQSRRKYMDGAHV).

This sequence belongs to the major facilitator superfamily. Monocarboxylate porter (TC 2.A.1.13) family.

The protein resides in the cell membrane. Proton-linked monocarboxylate transporter. May catalyze the transport of monocarboxylates across the plasma membrane. This Homo sapiens (Human) protein is Monocarboxylate transporter 14 (SLC16A14).